A 290-amino-acid chain; its full sequence is 33 kDa chaperonin (290 aa).

Cystine bridges form between Cys235–Cys237 and Cys268–Cys271.

The protein belongs to the HSP33 family. Post-translationally, under oxidizing conditions two disulfide bonds are formed involving the reactive cysteines. Under reducing conditions zinc is bound to the reactive cysteines and the protein is inactive.

The protein localises to the cytoplasm. In terms of biological role, redox regulated molecular chaperone. Protects both thermally unfolding and oxidatively damaged proteins from irreversible aggregation. Plays an important role in the bacterial defense system toward oxidative stress. This chain is 33 kDa chaperonin, found in Streptococcus pyogenes serotype M6 (strain ATCC BAA-946 / MGAS10394).